Consider the following 498-residue polypeptide: MRINPTTSDPEVSIREKKNLGRIAQIIGPVLDVAFPPGKMPNIYNALVVKGRDTLGQEINVTCEVQQLLGNNRVRAVAMSATEGLKRGMDVVDMGNPLSVPVGGATLGRIFNVLGEPVDNLGPVDTRTTSPIHKSAPAFIELDTKLSIFETGIKVVDLLAPYRRGGKIGLFGGAGVGKTVLIMELINNIAKAHGGVSVFGGVGERTREGNDLYMEMKESGVINEQNLAESKVALVYGQMNEPPGARMRVGLTALTMAEYFRDVNEQDVLLFIDNIFRFVQAGSEVSALLGRMPSAVGYQPTLSTEMGSLQERITSTKKGSITSIQAVYVPADDLTDPAPATTFAHLDATTVLSRGLAAKGIYPAVDPLDSTSTMLQPRIVGEEHYETAQQVKQTLQRYKELQDIIAILGLDELSEEDRLTVARARKIERFLSQPFFVAEVFTGSPGKYVGLAETIRGFKLILSGEFDSLPEQAFYLVGNIDEATAKATNLEMESKLKK.

T6 bears the Phosphothreonine mark. S13 bears the Phosphoserine mark. 172 to 179 (GGAGVGKT) is an ATP binding site.

This sequence belongs to the ATPase alpha/beta chains family. In terms of assembly, F-type ATPases have 2 components, CF(1) - the catalytic core - and CF(0) - the membrane proton channel. CF(1) has five subunits: alpha(3), beta(3), gamma(1), delta(1), epsilon(1). CF(0) has four main subunits: a(1), b(1), b'(1) and c(9-12).

The protein localises to the plastid. The protein resides in the chloroplast thylakoid membrane. The catalysed reaction is ATP + H2O + 4 H(+)(in) = ADP + phosphate + 5 H(+)(out). In terms of biological role, produces ATP from ADP in the presence of a proton gradient across the membrane. The catalytic sites are hosted primarily by the beta subunits. The polypeptide is ATP synthase subunit beta, chloroplastic (Arabis hirsuta (Hairy rock-cress)).